Here is a 1501-residue protein sequence, read N- to C-terminus: Pleiotropic ABC efflux transporter of multiple drugs CDR1 (1501 aa).

The disordered stretch occupies residues 1–30; it reads MSDSKMSSQDESKLEKAISQDSSSENHSIN. Over 1–513 the chain is Cytoplasmic; sequence MSDSKMSSQD…NFLRMKGDPS (513 aa). Positions 2-512 are NBD1; the sequence is SDSKMSSQDE…RNFLRMKGDP (511 aa). Residues 8–18 are compositionally biased toward basic and acidic residues; the sequence is SQDESKLEKAI. The ABC transporter 1 domain occupies 150-404; the sequence is LATEGFRHFQ…FEKMGWKCPQ (255 aa). A helical transmembrane segment spans residues 514–534; the sequence is IPIFSVFGQLVMGLILSSVFY. The Extracellular segment spans residues 535–548; it reads NLSQTTGSFYYRGA. Residues 549–569 traverse the membrane as a helical segment; it reads AMFFAVLFNAFSSLLEIMSLF. Residues 570-597 lie on the Cytoplasmic side of the membrane; that stretch reads EARPIVEKHKKYALYRPSADALASIISE. The helical transmembrane segment at 598–618 threads the bilayer; the sequence is LPVKLAMSMSFNFVFYFMVNF. The Extracellular portion of the chain corresponds to 619–622; that stretch reads RRNP. Residues 623 to 643 form a helical membrane-spanning segment; sequence GRFFFYWLMCIWCTFVMSHLF. At 644–654 the chain is on the cytoplasmic side; that stretch reads RSIGAVSTSIS. A helical membrane pass occupies residues 655 to 675; that stretch reads GAMTPATVLLLAMVIYTGFVI. Topologically, residues 676–764 are extracellular; it reads PTPSMLGWSR…QYYNSHKWRN (89 aa). Residues 765–785 form a helical membrane-spanning segment; sequence LGITIGFAVFFLAIYIALTEF. At 786-1195 the chain is on the cytoplasmic side; sequence NKGAMQKGEI…TIVQDWRSPG (410 aa). The tract at residues 786–1195 is NBD2; the sequence is NKGAMQKGEI…TIVQDWRSPG (410 aa). One can recognise an ABC transporter 2 domain in the interval 859–1103; sequence FFWRDLTYQV…MINYFEKYGA (245 aa). Residue 895–902 coordinates ATP; sequence GASGAGKT. A coiled-coil region spans residues 1137-1164; sequence RNSSEYQAVREEINRMEAELSKLPRDND. The chain crosses the membrane as a helical span at residues 1196 to 1216; that stretch reads YIYSKIFLVVSAALFNGFSFF. The Extracellular segment spans residues 1217 to 1229; the sequence is KAKNNMQGLQNQM. A helical membrane pass occupies residues 1230–1250; the sequence is FSVFMFFIPFNTLVQQMLPYF. The Cytoplasmic portion of the chain corresponds to 1251–1280; sequence VKQRDVYEVREAPSRTFSWFAFIAGQITSE. The helical transmembrane segment at 1281–1301 threads the bilayer; the sequence is IPYQVAVGTIAFFCWYYPLGL. Over 1302–1314 the chain is Extracellular; sequence YNNATPTDSVNPR. The chain crosses the membrane as a helical span at residues 1315-1335; sequence GVLMWMLVTAFYVYTATMGQL. The Cytoplasmic segment spans residues 1336–1355; it reads CMSFSELADNAANLATLLFT. Residues 1356-1376 traverse the membrane as a helical segment; sequence MCLNFCGVLAGPDVLPGFWIF. Residues 1377–1466 lie on the Extracellular side of the membrane; it reads MYRCNPFTYL…NSLYSERWRN (90 aa). A helical transmembrane segment spans residues 1467 to 1487; it reads FGIFIAFIAINIILTVIFYWL. The Cytoplasmic portion of the chain corresponds to 1488 to 1501; the sequence is ARVPKGNREKKNKK.

This sequence belongs to the ABC transporter superfamily.

Its subcellular location is the cell membrane. Its activity is regulated as follows. Disulfiram reverses CDR1-mediated drug resistance by interaction with both ATP and substrate-binding sites of the transporter and may be useful for antifungal therapy. Pleiotropic ABC efflux transporter that confers resistance to numerous chemicals including anisomycin, cycloheximide, fluconazole, miconazole, ketoconazole, itriconazole, nystatin, terbinafine, amorolfine, brefeldin A, amphotericin B, fluphenazine, as well as estrogen. Plays a role in farnesol-induced apoptotic process through glutathione efflux activity. Mediates in-to-out translocation of membrane phospholipids including aminophospholipids and thus regulates asymmetric distribution of phosphatidylethanolamine. Exhibits nucleoside triphosphatase activity. The sequence is that of Pleiotropic ABC efflux transporter of multiple drugs CDR1 (CDR1) from Candida albicans (strain SC5314 / ATCC MYA-2876) (Yeast).